An 89-amino-acid polypeptide reads, in one-letter code: Small ribosomal subunit protein uS14A (89 aa).

Belongs to the universal ribosomal protein uS14 family. Part of the 30S ribosomal subunit. Contacts proteins S3 and S10.

Functionally, binds 16S rRNA, required for the assembly of 30S particles and may also be responsible for determining the conformation of the 16S rRNA at the A site. This chain is Small ribosomal subunit protein uS14A, found in Levilactobacillus brevis (strain ATCC 367 / BCRC 12310 / CIP 105137 / JCM 1170 / LMG 11437 / NCIMB 947 / NCTC 947) (Lactobacillus brevis).